The following is a 357-amino-acid chain: Uroporphyrinogen decarboxylase (357 aa).

Residues 27–31 (RQAGR), D77, Y154, T209, and H327 each bind substrate.

The protein belongs to the uroporphyrinogen decarboxylase family. As to quaternary structure, homodimer.

The protein resides in the cytoplasm. It carries out the reaction uroporphyrinogen III + 4 H(+) = coproporphyrinogen III + 4 CO2. The protein operates within porphyrin-containing compound metabolism; protoporphyrin-IX biosynthesis; coproporphyrinogen-III from 5-aminolevulinate: step 4/4. Catalyzes the decarboxylation of four acetate groups of uroporphyrinogen-III to yield coproporphyrinogen-III. This is Uroporphyrinogen decarboxylase from Nitrosococcus oceani (strain ATCC 19707 / BCRC 17464 / JCM 30415 / NCIMB 11848 / C-107).